A 300-amino-acid polypeptide reads, in one-letter code: Transcription elongation factor A protein 2 (300 aa).

The 78-residue stretch at 6-83 (EEIARIARRL…KSWKKLLDAS (78 aa)) folds into the TFIIS N-terminal domain. A Glycyl lysine isopeptide (Lys-Gly) (interchain with G-Cter in ubiquitin) cross-link involves residue lysine 58. Phosphoserine occurs at positions 60 and 101. The tract at residues 84 to 131 (DAKARERRRGGSLPTSSSKEASEAQDPSRKRPELPRMPSTPRITTFPP) is disordered. Residues 103-117 (EASEAQDPSRKRPEL) are compositionally biased toward basic and acidic residues. A TFIIS central domain is found at 139–255 (VRTKCREMLT…EHQMARTGGT (117 aa)). Residues 258-298 (DLFTCGKCRKKNCTYTQVQTRSSDEPMTTFVVCNECGNRWK) form a TFIIS-type zinc finger. Zn(2+) contacts are provided by cysteine 262, cysteine 265, cysteine 290, and cysteine 293.

The protein belongs to the TFS-II family. Interacts with the basal transcription factor GTF2B. Interacts with REXO1.

The protein localises to the nucleus. Functionally, necessary for efficient RNA polymerase II transcription elongation past template-encoded arresting sites. The arresting sites in DNA have the property of trapping a certain fraction of elongating RNA polymerases that pass through, resulting in locked ternary complexes. Cleavage of the nascent transcript by S-II allows the resumption of elongation from the new 3'-terminus. The chain is Transcription elongation factor A protein 2 (TCEA2) from Bos taurus (Bovine).